A 307-amino-acid polypeptide reads, in one-letter code: Dihydroorotate dehydrogenase B (NAD(+)), catalytic subunit (307 aa).

FMN-binding positions include Ser-22 and 46 to 47 (KA). Residues Lys-46 and 70-74 (NAIGL) contribute to the substrate site. FMN contacts are provided by Asn-102 and Asn-130. A substrate-binding site is contributed by Asn-130. The active-site Nucleophile is the Cys-133. Positions 168 and 194 each coordinate FMN. Position 195 to 196 (195 to 196 (NT)) interacts with substrate. FMN is bound by residues Gly-220, 246–247 (GG), and 268–269 (GT).

The protein belongs to the dihydroorotate dehydrogenase family. Type 1 subfamily. As to quaternary structure, heterotetramer of 2 PyrK and 2 PyrD type B subunits. FMN is required as a cofactor.

Its subcellular location is the cytoplasm. The enzyme catalyses (S)-dihydroorotate + NAD(+) = orotate + NADH + H(+). Its pathway is pyrimidine metabolism; UMP biosynthesis via de novo pathway; orotate from (S)-dihydroorotate (NAD(+) route): step 1/1. In terms of biological role, catalyzes the conversion of dihydroorotate to orotate with NAD(+) as electron acceptor. The polypeptide is Dihydroorotate dehydrogenase B (NAD(+)), catalytic subunit (pyrD) (Latilactobacillus sakei subsp. sakei (strain 23K) (Lactobacillus sakei subsp. sakei)).